We begin with the raw amino-acid sequence, 402 residues long: Chorismate synthase (402 aa).

Arginine 40 and arginine 46 together coordinate NADP(+). FMN contacts are provided by residues 134–136 (RAS), 255–256 (QA), glycine 299, 314–318 (KPIAT), and arginine 340.

The protein belongs to the chorismate synthase family. In terms of assembly, homotetramer. It depends on FMNH2 as a cofactor.

It carries out the reaction 5-O-(1-carboxyvinyl)-3-phosphoshikimate = chorismate + phosphate. Its pathway is metabolic intermediate biosynthesis; chorismate biosynthesis; chorismate from D-erythrose 4-phosphate and phosphoenolpyruvate: step 7/7. Functionally, catalyzes the anti-1,4-elimination of the C-3 phosphate and the C-6 proR hydrogen from 5-enolpyruvylshikimate-3-phosphate (EPSP) to yield chorismate, which is the branch point compound that serves as the starting substrate for the three terminal pathways of aromatic amino acid biosynthesis. This reaction introduces a second double bond into the aromatic ring system. In Leifsonia xyli subsp. xyli (strain CTCB07), this protein is Chorismate synthase.